Consider the following 298-residue polypeptide: Thymidylate synthase (298 aa).

Residues Arg25 and 159–160 (RR) each bind dUMP. The Nucleophile role is filled by Cys179. DUMP-binding positions include 200-203 (RSCD), Asn211, and 241-243 (HLY). A (6R)-5,10-methylene-5,6,7,8-tetrahydrofolate-binding site is contributed by Asp203. Ala297 contributes to the (6R)-5,10-methylene-5,6,7,8-tetrahydrofolate binding site.

Belongs to the thymidylate synthase family. Bacterial-type ThyA subfamily. In terms of assembly, homodimer.

It is found in the cytoplasm. It carries out the reaction dUMP + (6R)-5,10-methylene-5,6,7,8-tetrahydrofolate = 7,8-dihydrofolate + dTMP. It participates in pyrimidine metabolism; dTTP biosynthesis. Catalyzes the reductive methylation of 2'-deoxyuridine-5'-monophosphate (dUMP) to 2'-deoxythymidine-5'-monophosphate (dTMP) while utilizing 5,10-methylenetetrahydrofolate (mTHF) as the methyl donor and reductant in the reaction, yielding dihydrofolate (DHF) as a by-product. This enzymatic reaction provides an intracellular de novo source of dTMP, an essential precursor for DNA biosynthesis. The polypeptide is Thymidylate synthase (Rhodopseudomonas palustris (strain BisA53)).